The chain runs to 459 residues: MPREIITLQAGQCGNSVGQQFWQQLCQEHGINKDGNLEDFATEGGDRKDVFFYQSDDTRYIPRAILLDLEPRVLHSIQASPYKNIYNPENFYIHKDGTGAGNNWGMGYSMGEQVHEDILDMIDREADGSDSLEGFMMLHSIAGGTGSGLGSYMLERLNDRFPKKLIQTYSVFPNTQDGDIVVQPYNSLLSMRRLTQNADSVVVLDNGALTRIAADRLHVMNPSFEQTNQLVSTVMSASTTTLRYPGYMHNDLVGIVASLIPTPRCHFLMTSYTPFSGENVEQAKTVRKTTVLDVMRRLLQPKNRMVSTNPTKKSCYMSILNIIQGEADPSDVHKSLMRIRERRLATFIPWGPASIQVALTKKSPYVTSSHRVSGLMLANHTGIATLFKRIVAQYSTLRKRNAFLESYKREVPFKDGLGEFDEAKEVVQGLIAEYEEAEDADYLTKETAPTDEAEDKRAG.

142 to 148 is a binding site for GTP; that stretch reads AGGTGSG. The tract at residues 440 to 459 is disordered; it reads ADYLTKETAPTDEAEDKRAG.

It belongs to the tubulin family.

Its subcellular location is the cytoplasm. It localises to the cytoskeleton. It is found in the microtubule organizing center. The protein resides in the spindle pole body. Tubulin is the major constituent of microtubules. The gamma chain is found at microtubule organizing centers (MTOC) such as the spindle poles or the centrosome, suggesting that it is involved in the minus-end nucleation of microtubule assembly. In Cochliobolus heterostrophus (strain C5 / ATCC 48332 / race O) (Southern corn leaf blight fungus), this protein is Tubulin gamma chain (TUB4).